The following is a 248-amino-acid chain: UPF0736 protein BCG9842_B4111 (248 aa).

This sequence belongs to the UPF0736 family.

In Bacillus cereus (strain G9842), this protein is UPF0736 protein BCG9842_B4111.